We begin with the raw amino-acid sequence, 522 residues long: tRNA-2-methylthio-N(6)-dimethylallyladenosine synthase (522 aa).

Positions 1-26 are enriched in low complexity; sequence MSLTIPSPASGTSTSATTDTAPAAAP. The interval 1 to 27 is disordered; it reads MSLTIPSPASGTSTSATTDTAPAAAPQ. An MTTase N-terminal domain is found at 28 to 143; that stretch reads RTYQVRTFGC…LPALLDRARH (116 aa). Positions 37, 72, 106, 180, 184, and 187 each coordinate [4Fe-4S] cluster. In terms of domain architecture, Radical SAM core spans 166 to 396; the sequence is RDSVYSGWVS…TALQDRIAAE (231 aa). Positions 399-469 constitute a TRAM domain; the sequence is ARQLGRRVEV…AFHLVADPAS (71 aa). The segment at 481 to 522 is disordered; sequence GDAWDRSQADSCGAPVAGGGAGSNGGKGGVSLGMPALPVRRS. A compositionally biased stretch (gly residues) spans 496-511; that stretch reads VAGGGAGSNGGKGGVS.

This sequence belongs to the methylthiotransferase family. MiaB subfamily. Monomer. [4Fe-4S] cluster is required as a cofactor.

The protein localises to the cytoplasm. It catalyses the reaction N(6)-dimethylallyladenosine(37) in tRNA + (sulfur carrier)-SH + AH2 + 2 S-adenosyl-L-methionine = 2-methylsulfanyl-N(6)-dimethylallyladenosine(37) in tRNA + (sulfur carrier)-H + 5'-deoxyadenosine + L-methionine + A + S-adenosyl-L-homocysteine + 2 H(+). In terms of biological role, catalyzes the methylthiolation of N6-(dimethylallyl)adenosine (i(6)A), leading to the formation of 2-methylthio-N6-(dimethylallyl)adenosine (ms(2)i(6)A) at position 37 in tRNAs that read codons beginning with uridine. This chain is tRNA-2-methylthio-N(6)-dimethylallyladenosine synthase, found in Arthrobacter sp. (strain FB24).